Consider the following 99-residue polypeptide: ATP-dependent Clp protease adapter protein ClpS (99 aa).

The protein belongs to the ClpS family. Binds to the N-terminal domain of the chaperone ClpA.

Functionally, involved in the modulation of the specificity of the ClpAP-mediated ATP-dependent protein degradation. The protein is ATP-dependent Clp protease adapter protein ClpS of Acetivibrio thermocellus (strain ATCC 27405 / DSM 1237 / JCM 9322 / NBRC 103400 / NCIMB 10682 / NRRL B-4536 / VPI 7372) (Clostridium thermocellum).